The sequence spans 597 residues: Arginine--tRNA ligase (597 aa).

The 'HIGH' region motif lies at 125 to 135; that stretch reads PNTNKPLHLGH.

The protein belongs to the class-I aminoacyl-tRNA synthetase family. Monomer.

The protein localises to the cytoplasm. It catalyses the reaction tRNA(Arg) + L-arginine + ATP = L-arginyl-tRNA(Arg) + AMP + diphosphate. In Parabacteroides distasonis (strain ATCC 8503 / DSM 20701 / CIP 104284 / JCM 5825 / NCTC 11152), this protein is Arginine--tRNA ligase.